We begin with the raw amino-acid sequence, 404 residues long: Cysteine desulfurase IscS (404 aa).

Residues 75-76, Asn-155, Gln-183, and 203-205 each bind pyridoxal 5'-phosphate; these read AT and SGH. Lys-206 is subject to N6-(pyridoxal phosphate)lysine. Position 243 (Thr-243) interacts with pyridoxal 5'-phosphate. The Cysteine persulfide intermediate role is filled by Cys-328. A [2Fe-2S] cluster-binding site is contributed by Cys-328.

The protein belongs to the class-V pyridoxal-phosphate-dependent aminotransferase family. NifS/IscS subfamily. As to quaternary structure, homodimer. Forms a heterotetramer with IscU, interacts with other sulfur acceptors. Pyridoxal 5'-phosphate is required as a cofactor.

The protein resides in the cytoplasm. It catalyses the reaction (sulfur carrier)-H + L-cysteine = (sulfur carrier)-SH + L-alanine. It participates in cofactor biosynthesis; iron-sulfur cluster biosynthesis. Its function is as follows. Master enzyme that delivers sulfur to a number of partners involved in Fe-S cluster assembly, tRNA modification or cofactor biosynthesis. Catalyzes the removal of elemental sulfur and selenium atoms from cysteine and selenocysteine to produce alanine. Functions as a sulfur delivery protein for Fe-S cluster synthesis onto IscU, an Fe-S scaffold assembly protein, as well as other S acceptor proteins. Also functions as a selenium delivery protein in the pathway for the biosynthesis of selenophosphate. The polypeptide is Cysteine desulfurase IscS (Salmonella typhi).